An 834-amino-acid polypeptide reads, in one-letter code: Probable glucan 1,3-beta-glucosidase D (834 aa).

Residues 1–33 (MPSHSRSRDRYGGRDSDREARYDYDYARRRYAT) show a composition bias toward basic and acidic residues. Disordered regions lie at residues 1-188 (MPSH…ASHL) and 200-251 (QYEK…TKAR). The Cytoplasmic portion of the chain corresponds to 1-306 (MPSHSRSRDR…GGRPFWKRKK (306 aa)). The span at 34 to 45 (DDNDDDYDDDEL) shows a compositional bias: acidic residues. 4 stretches are compositionally biased toward basic and acidic residues: residues 46-76 (EHGL…RDAE), 98-173 (YGHD…ETAA), 201-218 (YEKE…AAKA), and 228-245 (VVGE…ESHR). Residues 307 to 327 (WIGLGALILILVIVIPVAVVV) form a helical; Signal-anchor for type II membrane protein membrane-spanning segment. At 328-834 (SKKHDNKSDP…PDFGNLPEYY (507 aa)) the chain is on the extracellular side. Residues 331 to 354 (HDNKSDPADPQGTSPGKSNLDGLS) form a disordered region. N-linked (GlcNAc...) asparagine glycosylation is found at asparagine 333, asparagine 379, asparagine 384, asparagine 396, asparagine 549, asparagine 561, and asparagine 570. The active-site Proton donor is the glutamate 600. N-linked (GlcNAc...) asparagine glycans are attached at residues asparagine 639, asparagine 672, and asparagine 692. Glutamate 705 acts as the Nucleophile in catalysis.

Belongs to the glycosyl hydrolase 5 (cellulase A) family.

It is found in the cell membrane. It carries out the reaction Successive hydrolysis of beta-D-glucose units from the non-reducing ends of (1-&gt;3)-beta-D-glucans, releasing alpha-glucose.. Functionally, glucosidase involved in the degradation of cellulosic biomass. Active on lichenan. The chain is Probable glucan 1,3-beta-glucosidase D (exgD) from Neosartorya fischeri (strain ATCC 1020 / DSM 3700 / CBS 544.65 / FGSC A1164 / JCM 1740 / NRRL 181 / WB 181) (Aspergillus fischerianus).